Consider the following 258-residue polypeptide: UPF0246 protein VP0504 (258 aa).

It belongs to the UPF0246 family.

The chain is UPF0246 protein VP0504 from Vibrio parahaemolyticus serotype O3:K6 (strain RIMD 2210633).